Consider the following 276-residue polypeptide: Formamidopyrimidine-DNA glycosylase (276 aa).

Pro-2 serves as the catalytic Schiff-base intermediate with DNA. Catalysis depends on Glu-3, which acts as the Proton donor. The active-site Proton donor; for beta-elimination activity is the Lys-58. The DNA site is built by His-92, Arg-111, and Lys-154. Residues 239–273 (QVYGHAGEECNNCGTILEKIKVNGRGTTFCPHCQV) form an FPG-type zinc finger. Arg-263 functions as the Proton donor; for delta-elimination activity in the catalytic mechanism.

It belongs to the FPG family. As to quaternary structure, monomer. Zn(2+) serves as cofactor.

It carries out the reaction Hydrolysis of DNA containing ring-opened 7-methylguanine residues, releasing 2,6-diamino-4-hydroxy-5-(N-methyl)formamidopyrimidine.. It catalyses the reaction 2'-deoxyribonucleotide-(2'-deoxyribose 5'-phosphate)-2'-deoxyribonucleotide-DNA = a 3'-end 2'-deoxyribonucleotide-(2,3-dehydro-2,3-deoxyribose 5'-phosphate)-DNA + a 5'-end 5'-phospho-2'-deoxyribonucleoside-DNA + H(+). Its function is as follows. Involved in base excision repair of DNA damaged by oxidation or by mutagenic agents. Acts as a DNA glycosylase that recognizes and removes damaged bases. Has a preference for oxidized purines, such as 7,8-dihydro-8-oxoguanine (8-oxoG). Has AP (apurinic/apyrimidinic) lyase activity and introduces nicks in the DNA strand. Cleaves the DNA backbone by beta-delta elimination to generate a single-strand break at the site of the removed base with both 3'- and 5'-phosphates. This Lactobacillus johnsonii (strain CNCM I-12250 / La1 / NCC 533) protein is Formamidopyrimidine-DNA glycosylase.